A 470-amino-acid polypeptide reads, in one-letter code: ATP synthase subunit beta (470 aa).

157-164 (GGAGVGKT) contacts ATP.

This sequence belongs to the ATPase alpha/beta chains family. As to quaternary structure, F-type ATPases have 2 components, CF(1) - the catalytic core - and CF(0) - the membrane proton channel. CF(1) has five subunits: alpha(3), beta(3), gamma(1), delta(1), epsilon(1). CF(0) has three main subunits: a(1), b(2) and c(9-12). The alpha and beta chains form an alternating ring which encloses part of the gamma chain. CF(1) is attached to CF(0) by a central stalk formed by the gamma and epsilon chains, while a peripheral stalk is formed by the delta and b chains.

The protein localises to the cell inner membrane. It catalyses the reaction ATP + H2O + 4 H(+)(in) = ADP + phosphate + 5 H(+)(out). Its function is as follows. Produces ATP from ADP in the presence of a proton gradient across the membrane. The catalytic sites are hosted primarily by the beta subunits. This is ATP synthase subunit beta from Geotalea uraniireducens (strain Rf4) (Geobacter uraniireducens).